The chain runs to 852 residues: Leucine--tRNA ligase (852 aa).

A 'HIGH' region motif is present at residues 51–61 (PYPSGDLHMGH). Positions 615-619 (KMSKS) match the 'KMSKS' region motif. Position 618 (K618) interacts with ATP.

Belongs to the class-I aminoacyl-tRNA synthetase family.

The protein resides in the cytoplasm. It catalyses the reaction tRNA(Leu) + L-leucine + ATP = L-leucyl-tRNA(Leu) + AMP + diphosphate. This Clavibacter sepedonicus (Clavibacter michiganensis subsp. sepedonicus) protein is Leucine--tRNA ligase.